A 147-amino-acid polypeptide reads, in one-letter code: Large ribosomal subunit protein uL13 (147 aa).

The disordered stretch occupies residues 128 to 147; sequence DQHPHGAQQPQPFEITQVAQ.

It belongs to the universal ribosomal protein uL13 family. Part of the 50S ribosomal subunit.

Its function is as follows. This protein is one of the early assembly proteins of the 50S ribosomal subunit, although it is not seen to bind rRNA by itself. It is important during the early stages of 50S assembly. This Streptomyces coelicolor (strain ATCC BAA-471 / A3(2) / M145) protein is Large ribosomal subunit protein uL13.